The primary structure comprises 513 residues: 2-isopropylmalate synthase (513 aa).

The region spanning 5–268 is the Pyruvate carboxyltransferase domain; sequence LIIFDTTLRD…DVGIDTTQIV (264 aa). Asp-14, His-202, His-204, and Asn-239 together coordinate Mn(2+). Residues 394 to 513 are regulatory domain; sequence RFISLSQRSE…KAVQKINPQI (120 aa).

The protein belongs to the alpha-IPM synthase/homocitrate synthase family. LeuA type 1 subfamily. Homodimer. Mn(2+) is required as a cofactor.

Its subcellular location is the cytoplasm. The catalysed reaction is 3-methyl-2-oxobutanoate + acetyl-CoA + H2O = (2S)-2-isopropylmalate + CoA + H(+). Its pathway is amino-acid biosynthesis; L-leucine biosynthesis; L-leucine from 3-methyl-2-oxobutanoate: step 1/4. In terms of biological role, catalyzes the condensation of the acetyl group of acetyl-CoA with 3-methyl-2-oxobutanoate (2-ketoisovalerate) to form 3-carboxy-3-hydroxy-4-methylpentanoate (2-isopropylmalate). The chain is 2-isopropylmalate synthase from Cupriavidus metallidurans (strain ATCC 43123 / DSM 2839 / NBRC 102507 / CH34) (Ralstonia metallidurans).